A 135-amino-acid chain; its full sequence is Snaclec rhodocetin subunit gamma (135 aa).

Intrachain disulfides connect C4–C15, C32–C129, and C104–C121. The C-type lectin domain occupies 11-130; it reads YDQHCYQAFN…CQAKNPFVCK (120 aa).

Belongs to the snaclec family. As to quaternary structure, heterotetramer of subunit alpha, beta, gamma and delta; only the gamma and the delta subunits are disulfide-linked. Alpha-beta heterodimer and gamma-delta heterodimer associate orthogonally, giving a cruciform conformation. This heterotetramer may covalently dimerizes thanks to the gamma subunit. In terms of tissue distribution, expressed by the venom gland.

The protein resides in the secreted. In terms of biological role, potent inhibitor of collagen-induced platelet aggregation. It acts by binding to the integrin alpha2A domain and blocks collagen binding to integrin alpha-2/beta-1 (ITGA2/ITGB1). The gamma/delta subunits mainly contribute to this activity. The sequence is that of Snaclec rhodocetin subunit gamma from Calloselasma rhodostoma (Malayan pit viper).